We begin with the raw amino-acid sequence, 294 residues long: 1,4-dihydroxy-2-naphthoate octaprenyltransferase (294 aa).

6 helical membrane-spanning segments follow: residues 35–55 (SAVWWKALLALVVAVALVIGV), 103–123 (AGLALALLSAPWLIMVGATCI), 140–160 (GFGEVAVFVFFGLVAVLGTEY), 166–186 (VDWVGLVLAVSTGALSSSVLV), 220–240 (LLVATGVLTVVLMVATSWCAV), and 272–292 (GLAMVVWAIAVAGALTLAGSV).

The protein belongs to the MenA family. Type 1 subfamily.

Its subcellular location is the cell membrane. The catalysed reaction is an all-trans-polyprenyl diphosphate + 1,4-dihydroxy-2-naphthoate + H(+) = a 2-demethylmenaquinol + CO2 + diphosphate. It functions in the pathway quinol/quinone metabolism; menaquinone biosynthesis; menaquinol from 1,4-dihydroxy-2-naphthoate: step 1/2. In terms of biological role, conversion of 1,4-dihydroxy-2-naphthoate (DHNA) to demethylmenaquinone (DMK). This is 1,4-dihydroxy-2-naphthoate octaprenyltransferase from Mycobacterium leprae (strain TN).